Consider the following 364-residue polypeptide: Dual-specificity RNA methyltransferase RlmN (364 aa).

Glu91 serves as the catalytic Proton acceptor. A Radical SAM core domain is found at 97 to 333 (ESDRGTLCIS…VTVRKTRGDD (237 aa)). Cys104 and Cys338 are oxidised to a cystine. Residues Cys111, Cys115, and Cys118 each contribute to the [4Fe-4S] cluster site. S-adenosyl-L-methionine contacts are provided by residues 164-165 (GE), Ser196, 218-220 (SLH), and Asn295. Cys338 serves as the catalytic S-methylcysteine intermediate.

The protein belongs to the radical SAM superfamily. RlmN family. The cofactor is [4Fe-4S] cluster.

Its subcellular location is the cytoplasm. It catalyses the reaction adenosine(2503) in 23S rRNA + 2 reduced [2Fe-2S]-[ferredoxin] + 2 S-adenosyl-L-methionine = 2-methyladenosine(2503) in 23S rRNA + 5'-deoxyadenosine + L-methionine + 2 oxidized [2Fe-2S]-[ferredoxin] + S-adenosyl-L-homocysteine. The catalysed reaction is adenosine(37) in tRNA + 2 reduced [2Fe-2S]-[ferredoxin] + 2 S-adenosyl-L-methionine = 2-methyladenosine(37) in tRNA + 5'-deoxyadenosine + L-methionine + 2 oxidized [2Fe-2S]-[ferredoxin] + S-adenosyl-L-homocysteine. Functionally, specifically methylates position 2 of adenine 2503 in 23S rRNA and position 2 of adenine 37 in tRNAs. m2A2503 modification seems to play a crucial role in the proofreading step occurring at the peptidyl transferase center and thus would serve to optimize ribosomal fidelity. The chain is Dual-specificity RNA methyltransferase RlmN from Neisseria meningitidis serogroup B (strain ATCC BAA-335 / MC58).